The primary structure comprises 115 residues: MSNTILKCTTRHVRIFTAVVENNDLIFDNGHLTLDIDPDNEFSWSDQSIKKVQDYFRELVDFQADNELSDYSLRKIGSLLEDFIRKLLKDGELSYNPNSRVMNYSMGLPRTQELL.

The protein belongs to the complex I NdhM subunit family. NDH-1 can be composed of about 15 different subunits; different subcomplexes with different compositions have been identified which probably have different functions.

The protein localises to the cellular thylakoid membrane. It carries out the reaction a plastoquinone + NADH + (n+1) H(+)(in) = a plastoquinol + NAD(+) + n H(+)(out). The catalysed reaction is a plastoquinone + NADPH + (n+1) H(+)(in) = a plastoquinol + NADP(+) + n H(+)(out). Its function is as follows. NDH-1 shuttles electrons from an unknown electron donor, via FMN and iron-sulfur (Fe-S) centers, to quinones in the respiratory and/or the photosynthetic chain. The immediate electron acceptor for the enzyme in this species is believed to be plastoquinone. Couples the redox reaction to proton translocation, and thus conserves the redox energy in a proton gradient. Cyanobacterial NDH-1 also plays a role in inorganic carbon-concentration. The polypeptide is NAD(P)H-quinone oxidoreductase subunit M (Prochlorococcus marinus (strain NATL2A)).